We begin with the raw amino-acid sequence, 176 residues long: Centromere protein R (176 aa).

A Glycyl lysine isopeptide (Lys-Gly) (interchain with G-Cter in SUMO2) cross-link involves residue lysine 8. Serine 17 carries the phosphoserine modification. The segment at 20 to 50 is DD1; it reads PSKIMRKKSITAFSPTTGTYQLSPFSSPRTP. Residue lysine 22 forms a Glycyl lysine isopeptide (Lys-Gly) (interchain with G-Cter in SUMO2) linkage. Position 28 is a phosphoserine (serine 28). The segment covering 34-48 has biased composition (polar residues); sequence PTTGTYQLSPFSSPR. The segment at 34-80 is disordered; sequence PTTGTYQLSPFSSPRTPKEQEHRDGPSNGTRKWSVLSSPARQDSTVK. Basic and acidic residues predominate over residues 49-58; it reads TPKEQEHRDG. Over residues 60 to 80 the composition is skewed to polar residues; it reads SNGTRKWSVLSSPARQDSTVK. A Nuclear localization signal motif is present at residues 63 to 66; it reads TRKW. The residue at position 71 (serine 71) is a Phosphoserine. A coiled-coil region spans residues 82–112; that stretch reads SDGFMMLLSKIERSSEKTMEIMKNLSSLQAL. Residues 118–122 carry the LXXLL motif motif; that stretch reads LEDLL. The LXXIL motif motif lies at 171 to 175; the sequence is LKAIL.

In terms of assembly, homodimer; mediated by the coiled coil domain. Interacts with CCNA2 and MTA1. Interacts with NFKB1 NF-kappa-B subunit. Component of the CENPA-CAD complex, composed of CENPI, CENPK, CENPL, CENPO, CENPP, CENPQ, CENPR and CENPS. The CENPA-CAD complex interacts with the CENPA-NAC complex, at least composed of CENPA, CENPC, CENPH, CENPM, CENPN, CENPT and CENPU. Interacts with TASOR.

It is found in the nucleus. The protein resides in the chromosome. Its subcellular location is the centromere. The protein localises to the kinetochore. In terms of biological role, transcription coregulator that can have both coactivator and corepressor functions. Involved in the coactivation of nuclear receptors for retinoid X (RXRs) and thyroid hormone (TRs) in a ligand-dependent fashion. In contrast, it does not coactivate nuclear receptors for retinoic acid, vitamin D, progesterone receptor, nor glucocorticoid. Acts as a coactivator for estrogen receptor alpha. Acts as a transcriptional corepressor via its interaction with the NFKB1 NF-kappa-B subunit, possibly by interfering with the transactivation domain of NFKB1. Induces apoptosis in breast cancer cells, but not in other cancer cells, via a caspase-2 mediated pathway that involves mitochondrial membrane permeabilization but does not require other caspases. May also act as an inhibitor of cyclin A-associated kinase. Also acts a component of the CENPA-CAD (nucleosome distal) complex, a complex recruited to centromeres which is involved in assembly of kinetochore proteins, mitotic progression and chromosome segregation. May be involved in incorporation of newly synthesized CENPA into centromeres via its interaction with the CENPA-NAC complex. This is Centromere protein R (Itgb3bp) from Rattus norvegicus (Rat).